The chain runs to 660 residues: Bifunctional polymyxin resistance protein ArnA (660 aa).

Positions 1-304 (MKTVVFAYHD…MLGLVQGSRL (304 aa)) are formyltransferase ArnAFT. Position 86 to 88 (86 to 88 (HLI)) interacts with (6R)-10-formyltetrahydrofolate. The Proton donor; for formyltransferase activity role is filled by His-104. (6R)-10-formyltetrahydrofolate is bound by residues Arg-114 and 136-140 (VKRAD). A dehydrogenase ArnADH region spans residues 314 to 660 (RRTRVLILGV…RTVDLTDKPS (347 aa)). Residues Asp-347 and 368-369 (DI) each bind NAD(+). UDP-alpha-D-glucuronate is bound by residues Ala-393, Tyr-398, and 432 to 433 (TS). The active-site Proton acceptor; for decarboxylase activity is Glu-434. Residues Arg-460, Asn-492, 526–535 (KLIDGGKQKR), and Tyr-613 each bind UDP-alpha-D-glucuronate. Arg-619 acts as the Proton donor; for decarboxylase activity in catalysis.

The protein in the N-terminal section; belongs to the Fmt family. UDP-L-Ara4N formyltransferase subfamily. This sequence in the C-terminal section; belongs to the NAD(P)-dependent epimerase/dehydratase family. UDP-glucuronic acid decarboxylase subfamily. Homohexamer, formed by a dimer of trimers.

The catalysed reaction is UDP-alpha-D-glucuronate + NAD(+) = UDP-beta-L-threo-pentopyranos-4-ulose + CO2 + NADH. The enzyme catalyses UDP-4-amino-4-deoxy-beta-L-arabinose + (6R)-10-formyltetrahydrofolate = UDP-4-deoxy-4-formamido-beta-L-arabinose + (6S)-5,6,7,8-tetrahydrofolate + H(+). It functions in the pathway nucleotide-sugar biosynthesis; UDP-4-deoxy-4-formamido-beta-L-arabinose biosynthesis; UDP-4-deoxy-4-formamido-beta-L-arabinose from UDP-alpha-D-glucuronate: step 1/3. Its pathway is nucleotide-sugar biosynthesis; UDP-4-deoxy-4-formamido-beta-L-arabinose biosynthesis; UDP-4-deoxy-4-formamido-beta-L-arabinose from UDP-alpha-D-glucuronate: step 3/3. The protein operates within bacterial outer membrane biogenesis; lipopolysaccharide biosynthesis. Its function is as follows. Bifunctional enzyme that catalyzes the oxidative decarboxylation of UDP-glucuronic acid (UDP-GlcUA) to UDP-4-keto-arabinose (UDP-Ara4O) and the addition of a formyl group to UDP-4-amino-4-deoxy-L-arabinose (UDP-L-Ara4N) to form UDP-L-4-formamido-arabinose (UDP-L-Ara4FN). The modified arabinose is attached to lipid A and is required for resistance to polymyxin and cationic antimicrobial peptides. The sequence is that of Bifunctional polymyxin resistance protein ArnA from Shigella sonnei (strain Ss046).